Reading from the N-terminus, the 266-residue chain is MVSTKTYTTRASTHPSPVAQRLFHLMDTKKANLCASVDVQTTSEFLSLIDKLGPYICLVKTHIDIIDDFSYEGTIVPLLELARKHNFMIFEDRKFADIGNTVKHQYTSGVYKISSWSDITNAHGVTGAGVVDGLKQGALETTKEPRGLLMLAELSSKGSLAYGEYTEKTVEIAKLDKEFVIGFIAQRDMGGHDEGFDWIVMTPGVGLDDKGDGLGQQYRTVDEVVSTGTDVIIVGRGLFGKGRDPEVEGKRYRDAGWNAYLKRTGQ.

Substrate contacts are provided by residues D38, 60 to 62 (KTH), 92 to 101 (DRKFADIGNT), Y218, and R236. K94 serves as the catalytic Proton donor.

The protein belongs to the OMP decarboxylase family.

The enzyme catalyses orotidine 5'-phosphate + H(+) = UMP + CO2. The protein operates within pyrimidine metabolism; UMP biosynthesis via de novo pathway; UMP from orotate: step 2/2. The sequence is that of Orotidine 5'-phosphate decarboxylase (URA3) from Candida maltosa (Yeast).